The following is a 265-amino-acid chain: 4-hydroxy-tetrahydrodipicolinate reductase (265 aa).

NAD(+) contacts are provided by residues 7–12 (GASGRM) and aspartate 33. Arginine 34 contributes to the NADP(+) binding site. Residues 96–98 (GTT) and 120–123 (AANM) contribute to the NAD(+) site. Catalysis depends on histidine 153, which acts as the Proton donor/acceptor. Histidine 154 is a binding site for (S)-2,3,4,5-tetrahydrodipicolinate. Lysine 157 serves as the catalytic Proton donor. 163–164 (GT) is a binding site for (S)-2,3,4,5-tetrahydrodipicolinate.

This sequence belongs to the DapB family.

Its subcellular location is the cytoplasm. The enzyme catalyses (S)-2,3,4,5-tetrahydrodipicolinate + NAD(+) + H2O = (2S,4S)-4-hydroxy-2,3,4,5-tetrahydrodipicolinate + NADH + H(+). It catalyses the reaction (S)-2,3,4,5-tetrahydrodipicolinate + NADP(+) + H2O = (2S,4S)-4-hydroxy-2,3,4,5-tetrahydrodipicolinate + NADPH + H(+). It participates in amino-acid biosynthesis; L-lysine biosynthesis via DAP pathway; (S)-tetrahydrodipicolinate from L-aspartate: step 4/4. Functionally, catalyzes the conversion of 4-hydroxy-tetrahydrodipicolinate (HTPA) to tetrahydrodipicolinate. This chain is 4-hydroxy-tetrahydrodipicolinate reductase, found in Burkholderia orbicola (strain AU 1054).